A 418-amino-acid polypeptide reads, in one-letter code: Sialidase-3 (418 aa).

The FRIP motif signature appears at 24–27 (YRIP). Arginine 25 and arginine 45 together coordinate substrate. The Proton acceptor role is filled by aspartate 50. The stretch at 129–140 (LYSEDSGCSWGE) is one BNR 1 repeat. Positions 179 and 181 each coordinate substrate. Residues 201 to 212 (FYSDDLGVTWHC) form a BNR 2 repeat. Positions 223 and 243 each coordinate substrate. One copy of the BNR 3 repeat lies at 252 to 263 (AFSTDSGDCFQK). Residue arginine 339 participates in substrate binding. Tyrosine 369 (nucleophile) is an active-site residue. Glutamate 386 is a catalytic residue.

Belongs to the glycosyl hydrolase 33 family. As to quaternary structure, interacts with CAV1; this interaction enhances NEU3 sialidase activity within caveola. Interacts with EGFR; this interaction mediates desialylation of EGFR enhancing downstream signaling. In terms of processing, palmitoylated; may regulate intracellular trafficking and anchorage to plasma membrane and endomembranes. In terms of tissue distribution, expressed in brain, cardiac muscle and weakly in liver.

Its subcellular location is the cell membrane. It is found in the membrane. The protein localises to the caveola. The protein resides in the early endosome membrane. It localises to the recycling endosome membrane. Its subcellular location is the lysosome membrane. The catalysed reaction is Hydrolysis of alpha-(2-&gt;3)-, alpha-(2-&gt;6)-, alpha-(2-&gt;8)- glycosidic linkages of terminal sialic acid residues in oligosaccharides, glycoproteins, glycolipids, colominic acid and synthetic substrates.. It carries out the reaction a ganglioside GD1a + H2O = a ganglioside GM1 + N-acetylneuraminate. It catalyses the reaction a ganglioside GD1a (d18:1(4E)) + H2O = a ganglioside GM1 (d18:1(4E)) + N-acetylneuraminate. The enzyme catalyses a ganglioside GD1b + H2O = a ganglioside GM1 + N-acetylneuraminate. The catalysed reaction is a ganglioside GD1b (d18:1(4E)) + H2O = a ganglioside GM1 (d18:1(4E)) + N-acetylneuraminate. It carries out the reaction a ganglioside GD3 + H2O = a ganglioside GM3 + N-acetylneuraminate. It catalyses the reaction a ganglioside GD3 (d18:1(4E)) + H2O = a ganglioside GM3 (d18:1(4E)) + N-acetylneuraminate. The enzyme catalyses a ganglioside GM3 + H2O = a beta-D-galactosyl-(1-&gt;4)-beta-D-glucosyl-(1&lt;-&gt;1)-ceramide + N-acetylneuraminate. The catalysed reaction is a ganglioside GM1 + H2O = a ganglioside GA1 + N-acetylneuraminate. It carries out the reaction a ganglioside GM1 (d18:1(4E)) + H2O = a ganglioside GA1 (d18:1(4E)) + N-acetylneuraminate. It catalyses the reaction a ganglioside GM2 (d18:1(4E)) + H2O = a ganglioside GA2 (d18:1(4E)) + N-acetylneuraminate. The enzyme catalyses a ganglioside GM3 (d18:1(4E)) + H2O = a beta-D-Gal-(1-&gt;4)-beta-D-Glc-(1&lt;-&gt;1)-Cer(d18:1(4E)) + N-acetylneuraminate. The catalysed reaction is a ganglioside GT1b + H2O = a ganglioside GD1b + N-acetylneuraminate. In terms of biological role, exo-alpha-sialidase that catalyzes the hydrolytic cleavage of the terminal sialic acid (N-acetylneuraminic acid, Neu5Ac) of a glycan moiety in the catabolism of glycolipids, glycoproteins and oligosacharides. Displays high catalytic efficiency for gangliosides including alpha-(2-&gt;3)-sialylated GD1a and GM3 and alpha-(2-&gt;8)-sialylated GD3. Plays a role in the regulation of transmembrane signaling through the modulation of ganglioside content of the lipid bilayer and by direct interaction with signaling receptors, such as EGFR. Desialylates EGFR and activates downstream signaling in proliferating cells. Contributes to clathrin-mediated endocytosis by regulating sorting of endocytosed receptors to early and recycling endosomes. The chain is Sialidase-3 (Neu3) from Rattus norvegicus (Rat).